A 409-amino-acid polypeptide reads, in one-letter code: Growth-regulating factor 8 (409 aa).

Gly residues-rich tracts occupy residues 1 to 10 (MLSSCGGHGH) and 27 to 36 (QQGGGGGGGQ). A disordered region spans residues 1–81 (MLSSCGGHGH…GGGGQMLSFS (81 aa)). Low complexity predominate over residues 56–68 (SSSSFLGSTSSSC). The QLQ domain occupies 107-142 (PFTPTQWMELEHQALIYKHIAANVSVPSSLLLPIRR). The region spanning 158 to 202 (DVEPRRCRRTDGKKWRCSRDAVGDQKYCERHINRGRHRSRKHVEG) is the WRC domain. 2 consecutive short sequence motifs (bipartite nuclear localization signal) follow at residues 163-173 (RCRRTDGKKWR) and 191-198 (RGRHRSRK). Residues 221–242 (SSRGHTVARQKQVKGSAATVSD) form a disordered region.

It belongs to the GRF family.

Its subcellular location is the nucleus. In terms of biological role, transcription activator that plays a regulatory role in gibberellin-induced stem elongation. This chain is Growth-regulating factor 8 (GRF8), found in Oryza sativa subsp. japonica (Rice).